Reading from the N-terminus, the 367-residue chain is MSSSQTLVVKLGTSVLTGGSRRLNRAHIVELVRQCAQQHAAGHRIVIVTSGAMAAGREHLGYPELPPTIASKQLLAAVGQSRLIQLWEQMFSIYGIHIGQMLLTRADLEDRERFLNARDTLRALLDNHIVPVINENDAVATAEIKVGDNDNLSALAAILAGADKLLLLTDQQGLFTADPRNNPQAELIRDVRGIDDDLRALAGDSVSGLGTGGMATKLQAADIACRAGIDTIIAAGSRPGVIGDVIASHPVGTCFHALETPLENRKRWIFGAPPAGELVVDDGALSAILERGSSLLPKGIREISGNFSRGEVIRIRSLQGRDVAHGVSRYNSDAMRMIAGHHSQQIGEILGYEYGPVAIHRDDMIVS.

Lys-10 contacts ATP. Substrate-binding residues include Ser-50, Asp-137, and Asn-149. Residues 169–170 (TD) and 211–217 (TGGMATK) contribute to the ATP site. A PUA domain is found at 275 to 353 (AGELVVDDGA…QQIGEILGYE (79 aa)).

The protein belongs to the glutamate 5-kinase family.

Its subcellular location is the cytoplasm. The catalysed reaction is L-glutamate + ATP = L-glutamyl 5-phosphate + ADP. It participates in amino-acid biosynthesis; L-proline biosynthesis; L-glutamate 5-semialdehyde from L-glutamate: step 1/2. Functionally, catalyzes the transfer of a phosphate group to glutamate to form L-glutamate 5-phosphate. The chain is Glutamate 5-kinase from Erwinia tasmaniensis (strain DSM 17950 / CFBP 7177 / CIP 109463 / NCPPB 4357 / Et1/99).